The chain runs to 262 residues: Probable aminoglycoside 3'-phosphotransferase (262 aa).

Catalysis depends on aspartate 187, which acts as the Proton acceptor.

Belongs to the aminoglycoside phosphotransferase family.

It catalyses the reaction kanamycin A + ATP = kanamycin 3'-phosphate + ADP + H(+). The polypeptide is Probable aminoglycoside 3'-phosphotransferase (ymdC) (Lactococcus lactis subsp. lactis (strain IL1403) (Streptococcus lactis)).